The following is a 434-amino-acid chain: Probable tRNA pseudouridine synthase D (434 aa).

Aspartate 93 acts as the Nucleophile in catalysis. One can recognise a TRUD domain in the interval glycine 169 to leucine 396.

Belongs to the pseudouridine synthase TruD family.

It catalyses the reaction uridine(13) in tRNA = pseudouridine(13) in tRNA. In terms of biological role, could be responsible for synthesis of pseudouridine from uracil-13 in transfer RNAs. The chain is Probable tRNA pseudouridine synthase D from Halobacterium salinarum (strain ATCC 29341 / DSM 671 / R1).